Here is a 2427-residue protein sequence, read N- to C-terminus: Interferon-induced very large GTPase 1 (2427 aa).

One can recognise a VLIG-type G domain in the interval 1485–1726 (DKRLFVLSVL…KISDFKFRVQ (242 aa)). Residues 1495–1502 (GLQSSGKS), 1548–1551 (DTEG), and 1625–1628 (TAKD) each bind GTP.

This sequence belongs to the TRAFAC class dynamin-like GTPase superfamily. Very large inducible GTPase (VLIG) family. As to expression, widely expressed. Expressed at low basal level in lung, heart, thymus and spleen; at still lower level in liver, ovary, kidney and brain. Expressed at very weak level in testis. Undetectable in embryo.

It localises to the cytoplasm. Its subcellular location is the cytosol. The protein localises to the nucleus. The sequence is that of Interferon-induced very large GTPase 1 (Gvin1) from Mus musculus (Mouse).